The sequence spans 207 residues: Guanylate kinase (207 aa).

The 180-residue stretch at 6 to 185 (GLLIVLSGPS…AKNRIQCIVE (180 aa)) folds into the Guanylate kinase-like domain. 13-20 (GPSGVGKG) contacts ATP.

It belongs to the guanylate kinase family.

Its subcellular location is the cytoplasm. It catalyses the reaction GMP + ATP = GDP + ADP. Its function is as follows. Essential for recycling GMP and indirectly, cGMP. The protein is Guanylate kinase of Staphylococcus aureus (strain USA300).